A 607-amino-acid polypeptide reads, in one-letter code: Guanine nucleotide-binding protein-like 1 (607 aa).

The span at 1-14 shows a compositional bias: basic residues; the sequence is MPRKKPFSVKQKKK. The disordered stretch occupies residues 1–81; the sequence is MPRKKPFSVK…GPRGYDPNRY (81 aa). Residues 15-26 show a composition bias toward basic and acidic residues; the sequence is QLQDKRERKRGL. A phosphoserine mark is found at serine 32, serine 33, and serine 34. Residues threonine 48 and threonine 50 each carry the phosphothreonine modification. 2 positions are modified to phosphoserine: serine 51 and serine 68. One can recognise a CP-type G domain in the interval 178 to 418; sequence WRQLWRVLEM…LCDCPGLIFP (241 aa). 225–228 is a binding site for GTP; sequence NKVD. Serine 324 is modified (phosphoserine). Residues 367 to 374 and 411 to 415 each bind GTP; these read GFPNVGKS and DCPGL. The segment at 544–607 is disordered; sequence GRVGPAGDEE…PYALLGEGEC (64 aa). The span at 550-585 shows a compositional bias: acidic residues; sequence GDEEEEEEEELSSSCEEEGEEDRDADEEGEGDEDTP. Residues serine 561, serine 562, and serine 563 each carry the phosphoserine modification.

The protein belongs to the TRAFAC class YlqF/YawG GTPase family.

Its function is as follows. Possible regulatory or functional link with the histocompatibility cluster. The sequence is that of Guanine nucleotide-binding protein-like 1 (Gnl1) from Rattus norvegicus (Rat).